We begin with the raw amino-acid sequence, 411 residues long: Translation initiation factor 2 subunit gamma (411 aa).

Residues 9-203 (QAEVNIGMVG…AIQDFIPTPK (195 aa)) form the tr-type G domain. Residues 18–25 (GHVDHGKT) are G1. 4 residues coordinate Mg(2+): Asp21, Thr25, Gly46, and Ser48. 21–26 (DHGKTS) contacts GTP. A G2 region spans residues 46 to 50 (GISIR). The Zn(2+) site is built by Cys61, Cys64, Cys73, and Cys76. The tract at residues 90–93 (DSPG) is G3. GTP is bound by residues 146–149 (NKID) and 181–183 (SAH). The segment at 146-149 (NKID) is G4. Positions 181-183 (SAH) are G5.

Belongs to the TRAFAC class translation factor GTPase superfamily. Classic translation factor GTPase family. EIF2G subfamily. As to quaternary structure, heterotrimer composed of an alpha, a beta and a gamma chain. Mg(2+) serves as cofactor.

The catalysed reaction is GTP + H2O = GDP + phosphate + H(+). Functionally, eIF-2 functions in the early steps of protein synthesis by forming a ternary complex with GTP and initiator tRNA. This is Translation initiation factor 2 subunit gamma from Methanocaldococcus jannaschii (strain ATCC 43067 / DSM 2661 / JAL-1 / JCM 10045 / NBRC 100440) (Methanococcus jannaschii).